The chain runs to 486 residues: Ribosomal RNA small subunit methyltransferase F (486 aa).

Residues 124-130 (ASAPGSK), glutamate 148, aspartate 175, and aspartate 193 contribute to the S-adenosyl-L-methionine site. Cysteine 246 serves as the catalytic Nucleophile.

The protein belongs to the class I-like SAM-binding methyltransferase superfamily. RsmB/NOP family.

The protein localises to the cytoplasm. The catalysed reaction is cytidine(1407) in 16S rRNA + S-adenosyl-L-methionine = 5-methylcytidine(1407) in 16S rRNA + S-adenosyl-L-homocysteine + H(+). In terms of biological role, specifically methylates the cytosine at position 1407 (m5C1407) of 16S rRNA. This Shewanella baltica (strain OS185) protein is Ribosomal RNA small subunit methyltransferase F.